A 246-amino-acid chain; its full sequence is Probable transcriptional regulatory protein YebC (246 aa).

The interval 1-20 (MAGHSKWANTRHRKAAQDAK) is disordered.

This sequence belongs to the TACO1 family.

The protein localises to the cytoplasm. The protein is Probable transcriptional regulatory protein YebC of Shigella boydii serotype 4 (strain Sb227).